We begin with the raw amino-acid sequence, 868 residues long: Leucine--tRNA ligase (868 aa).

A 'HIGH' region motif is present at residues 42-52; the sequence is PYPSGKLHMGH. Positions 627–631 match the 'KMSKS' region motif; the sequence is KMAKS. Position 630 (K630) interacts with ATP.

This sequence belongs to the class-I aminoacyl-tRNA synthetase family.

Its subcellular location is the cytoplasm. It catalyses the reaction tRNA(Leu) + L-leucine + ATP = L-leucyl-tRNA(Leu) + AMP + diphosphate. This is Leucine--tRNA ligase from Pseudomonas fluorescens (strain ATCC BAA-477 / NRRL B-23932 / Pf-5).